The sequence spans 89 residues: Phytosulfokines 1 (89 aa).

Positions 1–22 are cleaved as a signal peptide; it reads MVNPGRTARALCLLCLALLLLG. Residues 23-79 constitute a propeptide that is removed on maturation; sequence QDTHSRKLLLQEKHSHGVGNGTTTTQEPSRENGGSTGSNNNGQLQFDSAKWEEFHTD. The disordered stretch occupies residues 33-68; the sequence is QEKHSHGVGNGTTTTQEPSRENGGSTGSNNNGQLQF. N-linked (GlcNAc...) asparagine glycosylation occurs at Asn42. A sulfotyrosine mark is found at Tyr80 and Tyr82. A propeptide spanning residues 85–89 is cleaved from the precursor; that stretch reads DVKNP.

The protein belongs to the phytosulfokine family. Sulfation is important for activity and for the binding to a putative membrane receptor. In terms of processing, PSK-alpha is produced by endopeptidase digestion. PSK-beta is produced from PSK-alpha by exopeptidase digestion. In terms of tissue distribution, expressed throughout the seedling. More abundant in fragments containing shoot or root apexes where cells proliferate vigorously.

The protein resides in the secreted. Its function is as follows. Promotes plant cell differentiation, organogenesis and somatic embryogenesis as well as cell proliferation. This is Phytosulfokines 1 (PSK1) from Oryza sativa subsp. indica (Rice).